We begin with the raw amino-acid sequence, 126 residues long: Glycine cleavage system H protein (126 aa).

One can recognise a Lipoyl-binding domain in the interval 22–104; sequence VATIGITEYA…YEKAWMVKVE (83 aa). K63 is subject to N6-lipoyllysine.

Belongs to the GcvH family. As to quaternary structure, the glycine cleavage system is composed of four proteins: P, T, L and H. Requires (R)-lipoate as cofactor.

In terms of biological role, the glycine cleavage system catalyzes the degradation of glycine. The H protein shuttles the methylamine group of glycine from the P protein to the T protein. Is also involved in protein lipoylation via its role as an octanoyl/lipoyl carrier protein intermediate. The sequence is that of Glycine cleavage system H protein from Staphylococcus aureus (strain MSSA476).